Here is a 305-residue protein sequence, read N- to C-terminus: MSQGEAWADAFLEMMAVERAAARNTLTAYGKDLEDARGFLSRSGHDLHDADAETIEAYFQDLGARGLSPATAARRRSAVRQFYRFVLGEGWRTDDPSRRVAAPKAGRPLPKVLERDEIERLLAAASAKDSAQGLRLACMIELIYASGLRISELLALPLLALARDPAYLIVKGKGGKERLAPLNDAARAAVKAYLVERPAFLPKGQKDSPWLFPSRGATGRLTPRRVGQLLEDAAIAAGIDRQKVSPHVLRHAFATHLLEGGADLRVIQTLLGHADIATTQIYTHVAGEHLAHIVQTKHPLGRKKG.

The Core-binding (CB) domain occupies 2-87 (SQGEAWADAF…AVRQFYRFVL (86 aa)). Residues 108–295 (PLPKVLERDE…AGEHLAHIVQ (188 aa)) form the Tyr recombinase domain. Active-site residues include Arg149, Lys173, His247, Arg250, and His273. Tyr282 functions as the O-(3'-phospho-DNA)-tyrosine intermediate in the catalytic mechanism.

The protein belongs to the 'phage' integrase family. XerD subfamily. As to quaternary structure, forms a cyclic heterotetrameric complex composed of two molecules of XerC and two molecules of XerD.

The protein resides in the cytoplasm. In terms of biological role, site-specific tyrosine recombinase, which acts by catalyzing the cutting and rejoining of the recombining DNA molecules. The XerC-XerD complex is essential to convert dimers of the bacterial chromosome into monomers to permit their segregation at cell division. It also contributes to the segregational stability of plasmids. This is Tyrosine recombinase XerD from Caulobacter vibrioides (strain ATCC 19089 / CIP 103742 / CB 15) (Caulobacter crescentus).